The primary structure comprises 313 residues: Solute carrier family 35 member E3 (313 aa).

The next 9 membrane-spanning stretches (helical) occupy residues 17 to 37 (GLLF…WIYV), 40 to 60 (GFPN…GLYI), 77 to 97 (LLLL…SLQN), 126 to 143 (FSTR…GVIL), 153 to 173 (FLGM…QVWV), 187 to 206 (LLYY…VPFF), 225 to 245 (LMVL…YWII), 252 to 272 (TYNM…YVLF), and 275 to 295 (PLSI…LAYT).

Belongs to the TPT transporter family. SLC35E subfamily.

It localises to the membrane. Putative transporter. In Homo sapiens (Human), this protein is Solute carrier family 35 member E3 (SLC35E3).